Consider the following 800-residue polypeptide: Metabotropic glutamate receptor-like protein C (800 aa).

The signal sequence occupies residues 1 to 21; it reads MKMKIIFLILILIFSINIIKC. Topologically, residues 22-392 are extracellular; it reads DKEFKMLTLL…EVEFSQSLQY (371 aa). N-linked (GlcNAc...) asparagine glycosylation is found at Asn69, Asn107, Asn166, Asn258, Asn276, Asn302, and Asn345. The helical transmembrane segment at 393 to 413 threads the bilayer; it reads GFSITTGVLIAITIIMMLGIV. Topologically, residues 414–426 are cytoplasmic; the sequence is RYKSTPSIRSASP. Residues 427-447 form a helical membrane-spanning segment; it reads IFLNFILAGGIIVYIGIIVWV. Residues 448–463 are Extracellular-facing; the sequence is GPANDHQCNARLWLVT. A helical transmembrane segment spans residues 464–484; it reads LGFSTLIGSLVVKNFRIWLIF. Topologically, residues 485–499 are cytoplasmic; that stretch reads DNPELKSISITNYQL. Residues 500–520 traverse the membrane as a helical segment; sequence FPWVGACLVINIILMSILTSV. The Extracellular segment spans residues 521–551; it reads GDLREIDAQGIDSLGKYEFMKVCKMNSSGAS. Asn546 carries N-linked (GlcNAc...) asparagine glycosylation. The chain crosses the membrane as a helical span at residues 552–572; the sequence is TLYTILAYFAALLLVGVFVSW. The Cytoplasmic segment spans residues 573-586; the sequence is KIRIVDIQEFNESK. A helical membrane pass occupies residues 587–607; it reads AIANTLYAISFCLFVIVPLMI. Residues 608–616 are Extracellular-facing; that stretch reads SPQDKQSET. A helical membrane pass occupies residues 617 to 637; sequence IVLCTAGLFITTAALLIIFTP. Residues 638-800 lie on the Cytoplasmic side of the membrane; it reads KFWRVFTLGD…NDTEEEDKNQ (163 aa). Disordered stretches follow at residues 658-694 and 718-800; these read QSNVATARAESSKSSSGPKLNRRGNLVSDDFTDTETS and EFDD…DKNQ. The segment covering 718-732 has biased composition (acidic residues); sequence EFDDNNIEQDNDNDN. Residues 733-774 show a composition bias toward low complexity; the sequence is DNNNNNNNNNNNNNNNNNNNNNNNNNNNNNNNNNNNNNNNNN. Positions 781–791 are enriched in basic and acidic residues; sequence NDEKVEEKQQN.

The protein in the N-terminal section; belongs to the BMP lipoprotein family. This sequence in the C-terminal section; belongs to the G-protein coupled receptor 3 family. GABA-B receptor subfamily.

The protein localises to the membrane. This chain is Metabotropic glutamate receptor-like protein C (grlC), found in Dictyostelium discoideum (Social amoeba).